The sequence spans 466 residues: Ribulose bisphosphate carboxylase large chain (466 aa).

Lys-5 carries the N6,N6,N6-trimethyllysine modification. Residues Asn-114 and Thr-164 each contribute to the substrate site. The active-site Proton acceptor is the Lys-166. Lys-168 is a substrate binding site. Mg(2+)-binding residues include Lys-192, Asp-194, and Glu-195. The residue at position 192 (Lys-192) is an N6-carboxylysine. His-285 acts as the Proton acceptor in catalysis. Substrate-binding residues include Arg-286, His-318, and Ser-370.

It belongs to the RuBisCO large chain family. Type I subfamily. In terms of assembly, heterohexadecamer of 8 large chains and 8 small chains; disulfide-linked. The disulfide link is formed within the large subunit homodimers. It depends on Mg(2+) as a cofactor. The disulfide bond which can form in the large chain dimeric partners within the hexadecamer appears to be associated with oxidative stress and protein turnover.

The protein resides in the plastid. It is found in the chloroplast. It catalyses the reaction 2 (2R)-3-phosphoglycerate + 2 H(+) = D-ribulose 1,5-bisphosphate + CO2 + H2O. It carries out the reaction D-ribulose 1,5-bisphosphate + O2 = 2-phosphoglycolate + (2R)-3-phosphoglycerate + 2 H(+). Functionally, ruBisCO catalyzes two reactions: the carboxylation of D-ribulose 1,5-bisphosphate, the primary event in carbon dioxide fixation, as well as the oxidative fragmentation of the pentose substrate in the photorespiration process. Both reactions occur simultaneously and in competition at the same active site. The chain is Ribulose bisphosphate carboxylase large chain from Poliothyrsis sinensis (Chinese pearlbloom tree).